A 300-amino-acid chain; its full sequence is GTPase Era (300 aa).

The Era-type G domain occupies 6–173 (KSGFLSIIGR…VDVLKEHLPE (168 aa)). The tract at residues 14–21 (GRPNVGKS) is G1. GTP is bound at residue 14–21 (GRPNVGKS). Residues 40 to 44 (QTTRN) are G2. The tract at residues 61-64 (DTPG) is G3. GTP is bound by residues 61-65 (DTPGI) and 123-126 (NKID). The tract at residues 123–126 (NKID) is G4. Residues 152–154 (ISA) are G5. Residues 204 to 281 (TKEEVPHSIA…YLELWIKVKK (78 aa)) enclose the KH type-2 domain.

The protein belongs to the TRAFAC class TrmE-Era-EngA-EngB-Septin-like GTPase superfamily. Era GTPase family. Monomer.

The protein localises to the cytoplasm. Its subcellular location is the cell membrane. Functionally, an essential GTPase that binds both GDP and GTP, with rapid nucleotide exchange. Plays a role in 16S rRNA processing and 30S ribosomal subunit biogenesis and possibly also in cell cycle regulation and energy metabolism. The protein is GTPase Era of Oceanobacillus iheyensis (strain DSM 14371 / CIP 107618 / JCM 11309 / KCTC 3954 / HTE831).